A 544-amino-acid chain; its full sequence is NAD(P)H-quinone oxidoreductase chain 4 (544 aa).

Transmembrane regions (helical) follow at residues 29 to 49 (FPWL…IPLV), 60 to 80 (WYAL…YLNG), 115 to 135 (LILL…PVTF), 139 to 159 (LFFF…AVQD), 161 to 181 (LLFF…LAIW), 193 to 213 (FILY…AMAF), 234 to 254 (GFQA…LPIV), 268 to 288 (TAPV…YALF), 302 to 322 (FAPL…LTSF), 339 to 359 (MGFV…GAML), 360 to 380 (QMIS…ATYD), 400 to 422 (MFAM…GFVS), 442 to 462 (IVID…LLSM), and 488 to 508 (IYII…PKLV).

The protein belongs to the complex I subunit 4 family.

The protein resides in the cellular thylakoid membrane. The enzyme catalyses a plastoquinone + NADH + (n+1) H(+)(in) = a plastoquinol + NAD(+) + n H(+)(out). The catalysed reaction is a plastoquinone + NADPH + (n+1) H(+)(in) = a plastoquinol + NADP(+) + n H(+)(out). In terms of biological role, NDH-1 shuttles electrons from NAD(P)H, via FMN and iron-sulfur (Fe-S) centers, to quinones in the respiratory chain. The immediate electron acceptor for the enzyme in this species is believed to be plastoquinone. Couples the redox reaction to proton translocation (for every two electrons transferred, four hydrogen ions are translocated across the cytoplasmic membrane), and thus conserves the redox energy in a proton gradient. The chain is NAD(P)H-quinone oxidoreductase chain 4 from Synechococcus sp. (strain RCC307).